The chain runs to 488 residues: N-succinylglutamate 5-semialdehyde dehydrogenase (488 aa).

Position 221 to 226 (Gly221 to Gly226) interacts with NAD(+). Catalysis depends on residues Glu244 and Cys278.

This sequence belongs to the aldehyde dehydrogenase family. AstD subfamily.

The catalysed reaction is N-succinyl-L-glutamate 5-semialdehyde + NAD(+) + H2O = N-succinyl-L-glutamate + NADH + 2 H(+). Its pathway is amino-acid degradation; L-arginine degradation via AST pathway; L-glutamate and succinate from L-arginine: step 4/5. Catalyzes the NAD-dependent reduction of succinylglutamate semialdehyde into succinylglutamate. The polypeptide is N-succinylglutamate 5-semialdehyde dehydrogenase (Pseudomonas fluorescens (strain ATCC BAA-477 / NRRL B-23932 / Pf-5)).